A 208-amino-acid chain; its full sequence is Ubiquitin-conjugating enzyme E2 S (208 aa).

Residues 14 to 160 enclose the UBC core domain; that stretch reads QTIRQVMKEL…ARMMTEIHAQ (147 aa). The active-site Glycyl thioester intermediate is the Cys98. Positions 161–193 are disordered; it reads PAKCGAGASDAKDDDGPSTKKHAGLDKKLQDKK. Over residues 170-193 the composition is skewed to basic and acidic residues; the sequence is DAKDDDGPSTKKHAGLDKKLQDKK.

It belongs to the ubiquitin-conjugating enzyme family.

The enzyme catalyses S-ubiquitinyl-[E1 ubiquitin-activating enzyme]-L-cysteine + [E2 ubiquitin-conjugating enzyme]-L-cysteine = [E1 ubiquitin-activating enzyme]-L-cysteine + S-ubiquitinyl-[E2 ubiquitin-conjugating enzyme]-L-cysteine.. The protein operates within protein modification; protein ubiquitination. Its function is as follows. Catalyzes the covalent attachment of ubiquitin to other proteins. Acts as an essential factor of the anaphase promoting complex/cyclosome (APC/C), a cell cycle-regulated ubiquitin ligase that controls progression through mitosis. Acts by specifically elongating polyubiquitin chains initiated by the E2 enzyme vih/UbcH10 on APC/C substrates, enhancing the degradation of APC/C substrates by the proteasome and promoting mitotic exit. The polypeptide is Ubiquitin-conjugating enzyme E2 S (Drosophila virilis (Fruit fly)).